The chain runs to 163 residues: uncharacterized protein (163 aa).

The tract at residues 128-163 (PKKEKIKKAKRKKKGAKRASKKQKAKSKSARKSRRV) is disordered. Residues 129 to 163 (KKEKIKKAKRKKKGAKRASKKQKAKSKSARKSRRV) are compositionally biased toward basic residues.

This is an uncharacterized protein from Sulfurisphaera tokodaii (strain DSM 16993 / JCM 10545 / NBRC 100140 / 7) (Sulfolobus tokodaii).